The sequence spans 642 residues: Envelope glycoprotein (642 aa).

Residues 1–34 form the signal peptide; it reads MESPTHPKPSKDKTLSWNLAFLVGILFTIDIGMA. Residues 35–586 lie on the Extracellular side of the membrane; that stretch reads NPSPHQIYNV…FNKSPWFTTL (552 aa). N-linked (GlcNAc...) asparagine; by host glycans are attached at residues asparagine 43 and asparagine 58. Disulfide bonds link cysteine 125/cysteine 147 and cysteine 139/cysteine 152. Residues 233-283 form a disordered region; that stretch reads PPQAMGPNLVLPDQKPPSRQSQTGSKVATQRPQTNESAPRSVAPTTMGPKR. Positions 249-270 are enriched in polar residues; sequence PSRQSQTGSKVATQRPQTNESA. Asparagine 267, asparagine 302, and asparagine 307 each carry an N-linked (GlcNAc...) asparagine; by host glycan. 3 cysteine pairs are disulfide-bonded: cysteine 312/cysteine 315, cysteine 312/cysteine 539, and cysteine 531/cysteine 538. Positions 312-315 match the CXXC motif; it reads CWLC. Asparagine 334, asparagine 374, asparagine 390, and asparagine 410 each carry an N-linked (GlcNAc...) asparagine; by host glycan. The tract at residues 448 to 468 is fusion peptide; that stretch reads ISLTVALMLGGLTVGGIAAGV. 2 coiled-coil regions span residues 476–525 and 535–571; these read LETA…ILFL and KEEC…SQQG. An immunosuppression region spans residues 514–530; it reads LQNRRGLDILFLQEGGL. The CX6CC motif lies at 531-539; the sequence is CAALKEECC. A helical membrane pass occupies residues 587 to 607; that stretch reads ISSIMGPLLILLLILLFGPCI. The S-palmitoyl cysteine; by host moiety is linked to residue cysteine 606. Residues 608–642 lie on the Cytoplasmic side of the membrane; sequence LNRLVQFVKDRISVVQALILTQQYQQIKQYDPDRP.

In terms of assembly, the mature envelope protein (Env) consists of a trimer of SU-TM heterodimers attached by a labile interchain disulfide bond. In terms of processing, specific enzymatic cleavages in vivo yield mature proteins. Envelope glycoproteins are synthesized as an inactive precursor that is N-glycosylated and processed likely by host cell furin or by a furin-like protease in the Golgi to yield the mature SU and TM proteins. The cleavage site between SU and TM requires the minimal sequence [KR]-X-[KR]-R. The R-peptide is released from the C-terminus of the cytoplasmic tail of the TM protein upon particle formation as a result of proteolytic cleavage by the viral protease. Cleavage of this peptide is required for TM to become fusogenic. Post-translationally, the CXXC motif is highly conserved across a broad range of retroviral envelope proteins. It is thought to participate in the formation of a labile disulfide bond possibly with the CX6CC motif present in the transmembrane protein. Isomerization of the intersubunit disulfide bond to an SU intrachain disulfide bond is thought to occur upon receptor recognition in order to allow membrane fusion. The transmembrane protein is palmitoylated. In terms of processing, the R-peptide is palmitoylated.

Its subcellular location is the virion membrane. The protein localises to the host cell membrane. The surface protein (SU) attaches the virus to the host cell by binding to its receptor. This interaction triggers the refolding of the transmembrane protein (TM) and is thought to activate its fusogenic potential by unmasking its fusion peptide. Fusion occurs at the host cell plasma membrane. In terms of biological role, the transmembrane protein (TM) acts as a class I viral fusion protein. Under the current model, the protein has at least 3 conformational states: pre-fusion native state, pre-hairpin intermediate state, and post-fusion hairpin state. During viral and target cell membrane fusion, the coiled coil regions (heptad repeats) assume a trimer-of-hairpins structure, positioning the fusion peptide in close proximity to the C-terminal region of the ectodomain. The formation of this structure appears to drive apposition and subsequent fusion of viral and target cell membranes. Membranes fusion leads to delivery of the nucleocapsid into the cytoplasm. This is Envelope glycoprotein (env) from Felidae (cat family).